Consider the following 276-residue polypeptide: Probable endonuclease 4 (276 aa).

Residues H70, H108, E143, D176, H179, H210, D223, H225, and E255 each coordinate Zn(2+).

Belongs to the AP endonuclease 2 family. The cofactor is Zn(2+).

It carries out the reaction Endonucleolytic cleavage to 5'-phosphooligonucleotide end-products.. Its function is as follows. Endonuclease IV plays a role in DNA repair. It cleaves phosphodiester bonds at apurinic or apyrimidinic (AP) sites, generating a 3'-hydroxyl group and a 5'-terminal sugar phosphate. The polypeptide is Probable endonuclease 4 (Mesomycoplasma hyopneumoniae (strain J / ATCC 25934 / NCTC 10110) (Mycoplasma hyopneumoniae)).